A 450-amino-acid chain; its full sequence is Putative nucleolar protein 5-3 (450 aa).

A Nop domain is found at 252–370 (IAPNLTALVG…LEARLRNLEG (119 aa)). Positions 375–423 (ACEEEEEVNDKDTKKEADDEEEPKTEECSKKRKKEAELETVEDPAKKSK) are disordered. Residues 399 to 423 (TEECSKKRKKEAELETVEDPAKKSK) show a composition bias toward basic and acidic residues.

Belongs to the NOP5/NOP56 family.

Its subcellular location is the nucleus. The protein localises to the nucleolus. Functionally, required for 60S ribosomal subunit biogenesis. The sequence is that of Putative nucleolar protein 5-3 (NOP5-3) from Arabidopsis thaliana (Mouse-ear cress).